Reading from the N-terminus, the 532-residue chain is Ankyrin repeat-containing protein At2g01680 (532 aa).

7 ANK repeats span residues 9 to 38 (LTHQ…GDEL), 58 to 89 (AGET…TVKI), 93 to 122 (SDMN…ELCR), 127 to 156 (SNTS…SCAM), 161 to 190 (NGKT…AIVG), 195 to 224 (KGQT…TILN), and 229 to 259 (KGNT…EVNA). Helical transmembrane passes span 354-374 (ITVV…NLPG), 396-416 (VFCL…VVQI), 436-456 (LMWA…FAVV), and 467-487 (ITLL…YFVF).

The protein resides in the membrane. The chain is Ankyrin repeat-containing protein At2g01680 from Arabidopsis thaliana (Mouse-ear cress).